Here is a 188-residue protein sequence, read N- to C-terminus: Elongation factor P 1 (188 aa).

It belongs to the elongation factor P family.

Its subcellular location is the cytoplasm. It participates in protein biosynthesis; polypeptide chain elongation. Functionally, involved in peptide bond synthesis. Stimulates efficient translation and peptide-bond synthesis on native or reconstituted 70S ribosomes in vitro. Probably functions indirectly by altering the affinity of the ribosome for aminoacyl-tRNA, thus increasing their reactivity as acceptors for peptidyl transferase. The protein is Elongation factor P 1 (efp1) of Porphyromonas gingivalis (strain ATCC BAA-308 / W83).